Here is a 306-residue protein sequence, read N- to C-terminus: D-alanine--D-alanine ligase (306 aa).

Residues 102 to 300 (KIIAASAGVS…YGDIVKWIVE (199 aa)) enclose the ATP-grasp domain. 128–183 (PMKPPYVIKPIREGSSFGVVIVGSDETMPLHDIMNNEWVYDDEIMVEKYVPGRELT) serves as a coordination point for ATP. Mg(2+) contacts are provided by aspartate 253, glutamate 267, and asparagine 269.

Belongs to the D-alanine--D-alanine ligase family. Mg(2+) serves as cofactor. The cofactor is Mn(2+).

Its subcellular location is the cytoplasm. The enzyme catalyses 2 D-alanine + ATP = D-alanyl-D-alanine + ADP + phosphate + H(+). The protein operates within cell wall biogenesis; peptidoglycan biosynthesis. Functionally, cell wall formation. The sequence is that of D-alanine--D-alanine ligase from Bartonella bacilliformis (strain ATCC 35685 / KC583 / Herrer 020/F12,63).